A 483-amino-acid polypeptide reads, in one-letter code: Regulatory protein ViaA (483 aa).

This sequence belongs to the ViaA family. In terms of assembly, homodimer. Interacts with RavA.

The protein resides in the cytoplasm. Its function is as follows. Component of the RavA-ViaA chaperone complex, which may act on the membrane to optimize the function of some of the respiratory chains. ViaA stimulates the ATPase activity of RavA. The sequence is that of Regulatory protein ViaA from Escherichia coli (strain SMS-3-5 / SECEC).